The sequence spans 80 residues: MDNDEIFSKVRSIISEQLDKKEDEITTDSRFVEDLNADSLDIYELLYLLEEAFDDKIPENEANEFETVGDVVNFIKKRKG.

The 76-residue stretch at 4 to 79 (DEIFSKVRSI…DVVNFIKKRK (76 aa)) folds into the Carrier domain. An O-(pantetheine 4'-phosphoryl)serine modification is found at Ser-39.

This sequence belongs to the acyl carrier protein (ACP) family. In terms of processing, 4'-phosphopantetheine is transferred from CoA to a specific serine of apo-ACP by AcpS. This modification is essential for activity because fatty acids are bound in thioester linkage to the sulfhydryl of the prosthetic group.

It is found in the cytoplasm. Its pathway is lipid metabolism; fatty acid biosynthesis. In terms of biological role, carrier of the growing fatty acid chain in fatty acid biosynthesis. The chain is Acyl carrier protein from Borreliella burgdorferi (strain ATCC 35210 / DSM 4680 / CIP 102532 / B31) (Borrelia burgdorferi).